A 137-amino-acid polypeptide reads, in one-letter code: Large ribosomal subunit protein uL16 (137 aa).

It belongs to the universal ribosomal protein uL16 family. Part of the 50S ribosomal subunit.

Binds 23S rRNA and is also seen to make contacts with the A and possibly P site tRNAs. In Streptococcus sanguinis (strain SK36), this protein is Large ribosomal subunit protein uL16.